Reading from the N-terminus, the 431-residue chain is Serine--tRNA ligase (431 aa).

Residue 235–237 (TAE) coordinates L-serine. ATP-binding positions include 266–268 (RRE) and valine 282. L-serine is bound at residue glutamate 289. Position 353 to 356 (353 to 356 (EASS)) interacts with ATP. Residue serine 389 coordinates L-serine.

The protein belongs to the class-II aminoacyl-tRNA synthetase family. Type-1 seryl-tRNA synthetase subfamily. Homodimer. The tRNA molecule binds across the dimer.

The protein resides in the cytoplasm. The enzyme catalyses tRNA(Ser) + L-serine + ATP = L-seryl-tRNA(Ser) + AMP + diphosphate + H(+). It carries out the reaction tRNA(Sec) + L-serine + ATP = L-seryl-tRNA(Sec) + AMP + diphosphate + H(+). The protein operates within aminoacyl-tRNA biosynthesis; selenocysteinyl-tRNA(Sec) biosynthesis; L-seryl-tRNA(Sec) from L-serine and tRNA(Sec): step 1/1. Catalyzes the attachment of serine to tRNA(Ser). Is also able to aminoacylate tRNA(Sec) with serine, to form the misacylated tRNA L-seryl-tRNA(Sec), which will be further converted into selenocysteinyl-tRNA(Sec). This chain is Serine--tRNA ligase, found in Prosthecochloris aestuarii (strain DSM 271 / SK 413).